The chain runs to 300 residues: MARDRTRPEDFTRPLRRILVGGLVLLLLGIFLIWRIDSPRVEQFRAALIDRVVPSFEWLMTPMTKVAGMVENFQSYTRIYEQNQELRRELQQMKAWKEAALQLEQKNARLLDLNQVRLDPKLTHVTGVVLADSGSPFRQSVLLNVGARDGIRDGWATMDGIGLVGRISGVGRTTSRVILLTDTSSRIPVTVQPSGQRALLTGDNSPSPPLEFLDKPDLVRPGDRVVTSGDGGVFPADLLVGQVAQGPDRRLRVRLAADYGRLEFLRVLRSHELEPISDPGKLVAEPPAPPAPAAVEGADG.

Topologically, residues 1–17 are cytoplasmic; that stretch reads MARDRTRPEDFTRPLRR. Residues 18-38 form a helical membrane-spanning segment; sequence ILVGGLVLLLLGIFLIWRIDS. Residues 39–300 are Periplasmic-facing; sequence PRVEQFRAAL…APAAVEGADG (262 aa). Residues 74–117 adopt a coiled-coil conformation; sequence QSYTRIYEQNQELRRELQQMKAWKEAALQLEQKNARLLDLNQVR. The tract at residues 277–300 is disordered; it reads SDPGKLVAEPPAPPAPAAVEGADG.

Belongs to the MreC family.

It localises to the cell inner membrane. In terms of biological role, involved in formation and maintenance of cell shape. The protein is Cell shape-determining protein MreC of Cereibacter sphaeroides (Rhodobacter sphaeroides).